Here is a 113-residue protein sequence, read N- to C-terminus: Large ribosomal subunit protein uL22 (113 aa).

It belongs to the universal ribosomal protein uL22 family. Part of the 50S ribosomal subunit.

Functionally, this protein binds specifically to 23S rRNA; its binding is stimulated by other ribosomal proteins, e.g. L4, L17, and L20. It is important during the early stages of 50S assembly. It makes multiple contacts with different domains of the 23S rRNA in the assembled 50S subunit and ribosome. Its function is as follows. The globular domain of the protein is located near the polypeptide exit tunnel on the outside of the subunit, while an extended beta-hairpin is found that lines the wall of the exit tunnel in the center of the 70S ribosome. The sequence is that of Large ribosomal subunit protein uL22 from Natranaerobius thermophilus (strain ATCC BAA-1301 / DSM 18059 / JW/NM-WN-LF).